The sequence spans 320 residues: Pyrroline-5-carboxylate reductase 1, mitochondrial (320 aa).

Serine 2 carries the post-translational modification N-acetylserine. Residues 6–11 (IGAGQL) and serine 34 contribute to the NADP(+) site. The NADPH site is built by alanine 8, glutamine 10, leucine 11, serine 34, aspartate 36, asparagine 56, valine 70, lysine 71, and alanine 97. NADP(+) contacts are provided by residues asparagine 56, 69 to 72 (AVKP), and 95 to 97 (CAA). Residue glutamate 164 coordinates L-proline. Asparagine 230 provides a ligand contact to NADPH. Residues alanine 237 and threonine 238 each contribute to the L-proline site. Serine 278 is subject to Phosphoserine. Positions 292–320 (LDSPPGTSLAPSGHSKLLPRSMAPAGKQD) are disordered.

Belongs to the pyrroline-5-carboxylate reductase family. In terms of assembly, homodecamer; composed of 5 homodimers. Interacts with LTO1.

The protein resides in the mitochondrion. It carries out the reaction L-proline + NADP(+) = (S)-1-pyrroline-5-carboxylate + NADPH + 2 H(+). The catalysed reaction is L-proline + NAD(+) = (S)-1-pyrroline-5-carboxylate + NADH + 2 H(+). The protein operates within amino-acid biosynthesis; L-proline biosynthesis; L-proline from L-glutamate 5-semialdehyde: step 1/1. Oxidoreductase that catalyzes the last step in proline biosynthesis, which corresponds to the reduction of pyrroline-5-carboxylate to L-proline using NAD(P)H. At physiologic concentrations, has higher specific activity in the presence of NADH. Involved in the cellular response to oxidative stress. The chain is Pyrroline-5-carboxylate reductase 1, mitochondrial (PYCR1) from Bos taurus (Bovine).